We begin with the raw amino-acid sequence, 189 residues long: UPF0301 protein RrIowa_0061 (189 aa).

It belongs to the UPF0301 (AlgH) family.

The protein is UPF0301 protein RrIowa_0061 of Rickettsia rickettsii (strain Iowa).